The primary structure comprises 1081 residues: uncharacterized protein (1081 aa).

Coiled coils occupy residues 18–131 (AIEE…FEEN) and 173–242 (NHDE…NDDK). The span at 22–53 (NNKNREIQEKRQKETKDRNDRMVQNQKDRKEM) shows a compositional bias: basic and acidic residues. The segment at 22-60 (NNKNREIQEKRQKETKDRNDRMVQNQKDRKEMIGLTNEK) is disordered. Disordered regions lie at residues 250-321 (TDDE…KPGI) and 388-1081 (QEPK…GNDE). A compositionally biased stretch (pro residues) spans 267-283 (TPTPTPTPTPTPTPTPT). 2 stretches are compositionally biased toward low complexity: residues 284–313 (PTTTTTTTTTPKPTTTTTTTSTTTPTKTST) and 396–410 (NNQSNNNNNNNQAGD). Residues 411 to 421 (DQNKNQNRDEN) show a composition bias toward basic and acidic residues. 6 stretches are compositionally biased toward low complexity: residues 422–568 (NQGG…NNQE), 576–602 (NQDGGENNQDGGENNQDGENNQDGGEN), 614–623 (GENNQDGGEN), 633–644 (DGENNQDGGENN), 662–672 (GENNQDGGENN), and 680–733 (QDGG…NNQD). Composition is skewed to acidic residues over residues 748–768 (GGEDNQDGGEDNQDGGEDNQD), 778–832 (NNQD…DENN), and 840–854 (QDGDENNNQDGDENN). Composition is skewed to low complexity over residues 855–869 (NQDGGENNQDGGENN) and 877–888 (NQDGGENNQDGE). The segment covering 889–954 (NNQDGDENNN…GDENNQDGDE (66 aa)) has biased composition (acidic residues). Composition is skewed to low complexity over residues 955 to 975 (NNQGNDENNQDGDQNNQGGDE), 983 to 1026 (ENNQ…GGDE), and 1034 to 1081 (GENN…GNDE).

This is an uncharacterized protein from Dictyostelium discoideum (Social amoeba).